Here is a 394-residue protein sequence, read N- to C-terminus: Maltose permease (394 aa).

The Cytoplasmic segment spans residues 1 to 11 (MGAAFKWGAAA). Residues 12–38 (RKTVFPLFYFLIFFAFGALFPLLSVYL) form a helical membrane-spanning segment. The Extracellular segment spans residues 39-45 (QEEARLS). A helical transmembrane segment spans residues 46-74 (GAAIGWIMSLPPIVTMAAQPLWGTAADYT). Over 75–78 (RKPV) the chain is Cytoplasmic. Residues 79-104 (GLLLAALVLAALFGVMYALAGSYRLF) traverse the membrane as a helical segment. At 105–108 (VVLT) the chain is on the extracellular side. The chain crosses the membrane as a helical span at residues 109-126 (VLLSAMQSAIVPLSDSLA). Residues 127-137 (LRHVHEQGGNY) are Cytoplasmic-facing. Residues 138–160 (GAIRLWGSLGFAMAVLAVGWLSD) form a helical membrane-spanning segment. The Extracellular segment spans residues 161-163 (HIA). A helical transmembrane segment spans residues 164 to 183 (FAVIFYAFSLALLTAAALAT). Residues 184-213 (RLPRYPMGAPGALTRQDVRGLLASRPFRLL) are Cytoplasmic-facing. Residues 214 to 233 (LVATFLLFGPILANNSYFGL) form a helical membrane-spanning segment. Residues 234-237 (LIHE) lie on the Extracellular side of the membrane. The chain crosses the membrane as a helical span at residues 238–262 (LGGTLTGIGLAFLFAAGSEAPFMKA). Residues 263–272 (ADRLIGRFGM) are Cytoplasmic-facing. The helical transmembrane segment at 273-292 (VRLLLLAALISAARWLAYAA) threads the bilayer. Over 293–295 (DPP) the chain is Extracellular. A helical membrane pass occupies residues 296 to 318 (LWFVYMTTVVQGCSVGLAIPTAL). Topologically, residues 319 to 330 (QYARRLAPERVQ) are cytoplasmic. Residues 331–358 (STAVALYSAVGNGLGAWFCTLVGGYLLE) traverse the membrane as a helical segment. At 359-361 (RWQ) the chain is on the extracellular side. The helical transmembrane segment at 362-382 (IGAVYLFFSICTIVGVLVLLL) threads the bilayer. Topologically, residues 383–394 (LAKRERTAGEEK) are cytoplasmic.

This sequence belongs to the major facilitator superfamily.

The protein localises to the cell membrane. Functionally, high affinity transport of maltose. This is Maltose permease (malA) from Geobacillus stearothermophilus (Bacillus stearothermophilus).